A 481-amino-acid polypeptide reads, in one-letter code: Cysteine--tRNA ligase (481 aa).

C43 is a Zn(2+) binding site. The 'HIGH' region signature appears at 45–55 (ATVQGLPHIGH). Residues C221, H246, and E250 each coordinate Zn(2+). The 'KMSKS' region motif lies at 277–281 (KMSKS). An ATP-binding site is contributed by K280.

This sequence belongs to the class-I aminoacyl-tRNA synthetase family. In terms of assembly, monomer. It depends on Zn(2+) as a cofactor.

The protein resides in the cytoplasm. It carries out the reaction tRNA(Cys) + L-cysteine + ATP = L-cysteinyl-tRNA(Cys) + AMP + diphosphate. The polypeptide is Cysteine--tRNA ligase (Mycobacterium sp. (strain KMS)).